The primary structure comprises 275 residues: Myoblast determination protein 1 homolog 2 (275 aa).

The 52-residue stretch at 84 to 135 (DRRKAATMRERRRLGKVNDAFENLKRCTSNNPNQRLPKVEILRNAISYIESL) folds into the bHLH domain. Polar residues predominate over residues 232–265 (SGQEGSEGSPCSPQEGSILSRNGGTVPSPTNCPQ). The disordered stretch occupies residues 232–275 (SGQEGSEGSPCSPQEGSILSRNGGTVPSPTNCPQPSHDPIYQVL).

In terms of assembly, efficient DNA binding requires dimerization with another bHLH protein.

The protein localises to the nucleus. Functionally, may act as a transcriptional activator that promotes transcription of muscle-specific target genes and plays a role in muscle differentiation. This chain is Myoblast determination protein 1 homolog 2 (myod2), found in Oncorhynchus mykiss (Rainbow trout).